The chain runs to 151 residues: NADH-quinone oxidoreductase subunit I 2 (151 aa).

4Fe-4S ferredoxin-type domains are found at residues 49 to 82 (PRLNINPDNGETLCISCNLCALACPENLIVVTSE) and 93 to 122 (VTFTYDTSRCMFCGLCEDACPVDALELTQD). Residues Cys62, Cys65, Cys68, Cys72, Cys102, Cys105, Cys108, and Cys112 each contribute to the [4Fe-4S] cluster site.

It belongs to the complex I 23 kDa subunit family. NDH-1 is composed of 14 different subunits. Subunits NuoA, H, J, K, L, M, N constitute the membrane sector of the complex. [4Fe-4S] cluster serves as cofactor.

The protein resides in the cell inner membrane. The enzyme catalyses a quinone + NADH + 5 H(+)(in) = a quinol + NAD(+) + 4 H(+)(out). NDH-1 shuttles electrons from NADH, via FMN and iron-sulfur (Fe-S) centers, to quinones in the respiratory chain. The immediate electron acceptor for the enzyme in this species is believed to be ubiquinone. Couples the redox reaction to proton translocation (for every two electrons transferred, four hydrogen ions are translocated across the cytoplasmic membrane), and thus conserves the redox energy in a proton gradient. This Solibacter usitatus (strain Ellin6076) protein is NADH-quinone oxidoreductase subunit I 2.